The primary structure comprises 484 residues: Glutamyl-tRNA(Gln) amidotransferase subunit A (484 aa).

Active-site charge relay system residues include Lys-76 and Ser-151. The Acyl-ester intermediate role is filled by Ser-175.

Belongs to the amidase family. GatA subfamily. Heterotrimer of A, B and C subunits.

The enzyme catalyses L-glutamyl-tRNA(Gln) + L-glutamine + ATP + H2O = L-glutaminyl-tRNA(Gln) + L-glutamate + ADP + phosphate + H(+). Allows the formation of correctly charged Gln-tRNA(Gln) through the transamidation of misacylated Glu-tRNA(Gln) in organisms which lack glutaminyl-tRNA synthetase. The reaction takes place in the presence of glutamine and ATP through an activated gamma-phospho-Glu-tRNA(Gln). This Halorhodospira halophila (strain DSM 244 / SL1) (Ectothiorhodospira halophila (strain DSM 244 / SL1)) protein is Glutamyl-tRNA(Gln) amidotransferase subunit A.